Here is a 474-residue protein sequence, read N- to C-terminus: Adenosylhomocysteinase (474 aa).

Positions 61, 136, and 196 each coordinate substrate. NAD(+) is bound at residue 197-199 (TTT). The substrate site is built by Lys-226 and Asp-230. Residues Asn-231, 260 to 265 (GYGDVG), Glu-283, Asn-318, 339 to 341 (IGH), and Asn-384 contribute to the NAD(+) site.

It belongs to the adenosylhomocysteinase family. NAD(+) is required as a cofactor.

The protein localises to the cytoplasm. It catalyses the reaction S-adenosyl-L-homocysteine + H2O = L-homocysteine + adenosine. It functions in the pathway amino-acid biosynthesis; L-homocysteine biosynthesis; L-homocysteine from S-adenosyl-L-homocysteine: step 1/1. In terms of biological role, may play a key role in the regulation of the intracellular concentration of adenosylhomocysteine. This Ralstonia pickettii (strain 12J) protein is Adenosylhomocysteinase.